Here is a 202-residue protein sequence, read N- to C-terminus: ATP-dependent Clp protease proteolytic subunit (202 aa).

Ser-106 (nucleophile) is an active-site residue. The active site involves His-131.

It belongs to the peptidase S14 family. As to quaternary structure, fourteen ClpP subunits assemble into 2 heptameric rings which stack back to back to give a disk-like structure with a central cavity, resembling the structure of eukaryotic proteasomes.

It is found in the cytoplasm. It catalyses the reaction Hydrolysis of proteins to small peptides in the presence of ATP and magnesium. alpha-casein is the usual test substrate. In the absence of ATP, only oligopeptides shorter than five residues are hydrolyzed (such as succinyl-Leu-Tyr-|-NHMec, and Leu-Tyr-Leu-|-Tyr-Trp, in which cleavage of the -Tyr-|-Leu- and -Tyr-|-Trp bonds also occurs).. Functionally, cleaves peptides in various proteins in a process that requires ATP hydrolysis. Has a chymotrypsin-like activity. Plays a major role in the degradation of misfolded proteins. This chain is ATP-dependent Clp protease proteolytic subunit, found in Acidovorax ebreus (strain TPSY) (Diaphorobacter sp. (strain TPSY)).